A 203-amino-acid polypeptide reads, in one-letter code: Suppressor of RNA silencing p3 (203 aa).

The protein belongs to the tenuiviruses p3 protein family. In terms of assembly, homodimer.

It is found in the host cytoplasm. Acts as a suppressor of RNA-mediated gene silencing, also known as post-transcriptional gene silencing (PTGS), presumably through the binding of dsRNA. This chain is Suppressor of RNA silencing p3, found in Oryza sativa (Rice).